The primary structure comprises 194 residues: Putative manganese efflux pump MntP (194 aa).

The next 6 membrane-spanning stretches (helical) occupy residues Pro3–Gly23, Leu37–Leu57, Asp69–Leu89, Leu110–Phe132, Cys147–Gly167, and Met172–Gly192.

Belongs to the MntP (TC 9.B.29) family.

It is found in the cell inner membrane. Probably functions as a manganese efflux pump. The sequence is that of Putative manganese efflux pump MntP from Xanthomonas euvesicatoria pv. vesicatoria (strain 85-10) (Xanthomonas campestris pv. vesicatoria).